A 7839-amino-acid chain; its full sequence is Nonribosomal peptide synthetase GRA1 (7839 aa).

A compositionally biased stretch (polar residues) spans 1 to 23; the sequence is MALLNGKSTLPNGHNSSIESPNG. Residues 1–26 form a disordered region; sequence MALLNGKSTLPNGHNSSIESPNGYTE. The adenylation 1 stretch occupies residues 264 to 650; sequence LASPNSCAVH…LGRIDDQVKI (387 aa). Positions 793–866 constitute a Carrier 1 domain; it reads SAEALVLRQL…LQAEMSEKKK (74 aa). Residue serine 827 is modified to O-(pantetheine 4'-phosphoryl)serine. The interval 916-1332 is condensation 1; the sequence is DIYPASPLQE…ILSPSDVAQI (417 aa). Residues 1351–1742 form an adenylation 2 region; that stretch reads FFTQVKRSPD…QRKDAQLKIR (392 aa). The 78-residue stretch at 1880-1957 folds into the Carrier 2 domain; sequence ELETEAERTM…AMSRQATVSD (78 aa). O-(pantetheine 4'-phosphoryl)serine is present on serine 1918. The tract at residues 1997–2413 is condensation 2; that stretch reads DLYPCTPFQE…LISPSDMETI (417 aa). Positions 2432–2828 are adenylation 3; the sequence is FDRRLSQKHS…GRRDTQLKIR (397 aa). In terms of domain architecture, Carrier 3 spans 2963-3040; the sequence is IPTTQMEWNL…DLAQAIVLDT (78 aa). Serine 3001 bears the O-(pantetheine 4'-phosphoryl)serine mark. A condensation 3 region spans residues 3084–3496; the sequence is DIYPCTPLQD…QVDLISDSDH (413 aa). An adenylation 4 region spans residues 3520–3923; sequence RLAVSNPDAE…GRRDSQVKLR (404 aa). Positions 4057-4134 constitute a Carrier 4 domain; that stretch reads RPLTEREKDL…DMAAMTTSLS (78 aa). Position 4095 is an O-(pantetheine 4'-phosphoryl)serine (serine 4095). The tract at residues 4234–4569 is condensation 4; that stretch reads NLEEFVGRQS…MMNPDDAEEI (336 aa). The interval 4591-4982 is adenylation 5; sequence HSKGCPDRIA…VSRKDTQVKF (392 aa). Residues 5113–5189 form the Carrier 5 domain; that stretch reads ALSSDEESQL…DMALCMTSAQ (77 aa). Serine 5150 carries the O-(pantetheine 4'-phosphoryl)serine modification. Residues 5224-5653 are condensation 5; sequence EDIYPCSALQ…VSPSDQAEIL (430 aa). Residues 5671 to 6069 form an adenylation 6 region; it reads FESRARLQPS…GRRDTQVKLR (399 aa). Residues 6207–6282 form the Carrier 6 domain; sequence FPSSLAEQQM…HMAAIATTFT (76 aa). Serine 6243 is modified (O-(pantetheine 4'-phosphoryl)serine). The segment at 6321–6730 is condensation 6; sequence QDIYPCSALQ…RLADMDLTGP (410 aa). The segment at 6756–7147 is adenylation 7; it reads EQRVKSQPDS…LGRKDSQIKL (392 aa). Positions 7290-7366 constitute a Carrier 7 domain; the sequence is KAATPNEKTL…DLARVSRQSI (77 aa). Serine 7327 is subject to O-(pantetheine 4'-phosphoryl)serine. Positions 7404–7704 are condensation7; the sequence is HDIYPCTQVQ…LDYAKKRASS (301 aa).

This sequence belongs to the NRP synthetase family.

It functions in the pathway mycotoxin biosynthesis. In terms of biological role, nonribosomal peptide synthetase; part of the gene cluster that mediates the biosynthesis of gramillins A and B, bicyclic lipopeptides that induce cell death in maize leaves but not in wheat leaves. The nonribosomal peptide synthetase GRA1 incorporates respectively a glutamic adic (Glu), a leucine (Leu), a serine (Ser), a hydroxyglutamine (HOGln), a 2-amino decanoic acid, and 2 cysteins (CysB and CysA). The biosynthesis of 2-amino decanoic acid incorporated in gramillins could be initiated by a fatty acid synthase composed of the alpha and beta subunits FGSG_00036 and FGSG_11656. The cytochrome P450 monooxygenase FGSG_15680 could hydroxylate the fatty acid chain. Subsequent oxidation to the ketone by the oxidoreductase FGSG_00048 and transamination by aminotransferase FGSG_00049 could form 2-amino-decanoic acid. On the other hand, FGSG_15680 could also be responsible for the HO-modified glutamine at the gamma-position. Whether hydroxylation occurs on the fully assembled product or on the Gln residue prior to assembly into the gramillins requires further proof. The thioredoxin FGSG_00043 could also be required for the disulfide-bond formation between CysA and CysB. The specific involvement of the remaining proteins from the cluster is more difficult to discern, but could have broader regulatory (FGSG_00040 and FGSG_11657) or enzymatic functions (FGSG_00044 and FGSG_00045). The final C-domain of GRA1 does not possess the expected sequence of a termination CT domain, often implicated in macrocyclization and release of a cyclopeptidein fungal NRPs; and the thioesterase FGSG_00047 may act in concert with the terminal C-domain of GRA1 to catalyze the formation of the macrocyclic anhydride and release of the products. This is Nonribosomal peptide synthetase GRA1 from Gibberella zeae (strain ATCC MYA-4620 / CBS 123657 / FGSC 9075 / NRRL 31084 / PH-1) (Wheat head blight fungus).